The chain runs to 169 residues: Centrosomal protein 20 (169 aa).

Residues 1–104 (MATVGDLKAV…VVEDLNSQSV (104 aa)) form a necessary and sufficient for homooligomerization and localization to centrosomes and pericentriolar satellites region. Residues 49 to 81 (ENLLINELIREYLAFNKYSYTSSVLTAETGLSE) enclose the LisH domain. A disordered region spans residues 135–169 (TFRNIPRGRNTKDTHSGPVQLTQTSTEDWHQRRHR). The segment covering 151 to 160 (GPVQLTQTST) has biased composition (polar residues).

This sequence belongs to the CEP43 family. As to quaternary structure, homooligomer; probably required for localization to centrosomes.

Its subcellular location is the cell projection. It localises to the cilium. The protein localises to the cytoplasm. The protein resides in the cytoskeleton. It is found in the cilium basal body. Its subcellular location is the microtubule organizing center. It localises to the centrosome. The protein localises to the cytoplasmic granule. The protein resides in the centriolar satellite. Involved in the biogenesis of cilia. Required for the recruitment of PLK1 to centrosomes and S phase progression. This Xenopus laevis (African clawed frog) protein is Centrosomal protein 20 (Cep20).